A 207-amino-acid chain; its full sequence is Urease accessory protein UreG (207 aa).

16–23 provides a ligand contact to GTP; sequence GPVGSGKT.

This sequence belongs to the SIMIBI class G3E GTPase family. UreG subfamily. Homodimer. UreD, UreF and UreG form a complex that acts as a GTP-hydrolysis-dependent molecular chaperone, activating the urease apoprotein by helping to assemble the nickel containing metallocenter of UreC. The UreE protein probably delivers the nickel.

The protein resides in the cytoplasm. Its function is as follows. Facilitates the functional incorporation of the urease nickel metallocenter. This process requires GTP hydrolysis, probably effectuated by UreG. The chain is Urease accessory protein UreG from Cupriavidus metallidurans (strain ATCC 43123 / DSM 2839 / NBRC 102507 / CH34) (Ralstonia metallidurans).